Reading from the N-terminus, the 908-residue chain is Translation initiation factor IF-2 (908 aa).

A disordered region spans residues 145-312 (EIPGLTQRAK…KGKKRQAEKI (168 aa)). The segment covering 167–177 (VVERPEARPSA) has biased composition (basic and acidic residues). 2 stretches are compositionally biased toward low complexity: residues 194–217 (RPEGGYRPAGPRPAGQRPEGPRPG) and 263–276 (VAGAGKKGPAGAAV). The segment covering 278 to 296 (KRKEEFKKTELFEKHERVF) has biased composition (basic and acidic residues). The region spanning 408 to 577 (KRPPVVTIMG…LLQADVLELK (170 aa)) is the tr-type G domain. Residues 417–424 (GHVDHGKT) form a G1 region. 417-424 (GHVDHGKT) lines the GTP pocket. The G2 stretch occupies residues 442 to 446 (GITQH). Positions 463–466 (DTPG) are G3. Residues 463–467 (DTPGH) and 517–520 (NKID) each bind GTP. The interval 517-520 (NKID) is G4. The segment at 553–555 (SAK) is G5.

Belongs to the TRAFAC class translation factor GTPase superfamily. Classic translation factor GTPase family. IF-2 subfamily.

Its subcellular location is the cytoplasm. Its function is as follows. One of the essential components for the initiation of protein synthesis. Protects formylmethionyl-tRNA from spontaneous hydrolysis and promotes its binding to the 30S ribosomal subunits. Also involved in the hydrolysis of GTP during the formation of the 70S ribosomal complex. This is Translation initiation factor IF-2 from Geotalea daltonii (strain DSM 22248 / JCM 15807 / FRC-32) (Geobacter daltonii).